Consider the following 176-residue polypeptide: GKAKPRLEIEGYPVEGISIGGHETCVIFPTLSLAFDIGRCPQRAVAQDFLFISHAHLDHIGGLPMYVATRGLYRLRPPTIFVPKYLRELVERLFDVHRAMDQSELNHTLVPLDIGEEYELRRDLKVRAFKTYHTIPSQGYVIYSVKQKLKQDYLGLPGSEIKRLKLSGVEITNTVT.

Belongs to the RNase Z family. As to quaternary structure, homodimer. Requires Zn(2+) as cofactor.

The protein resides in the nucleus. It carries out the reaction Endonucleolytic cleavage of RNA, removing extra 3' nucleotides from tRNA precursor, generating 3' termini of tRNAs. A 3'-hydroxy group is left at the tRNA terminus and a 5'-phosphoryl group is left at the trailer molecule.. Functionally, zinc phosphodiesterase, which displays some tRNA 3'-processing endonuclease activity. Probably involved in tRNA maturation, by removing a 3'-trailer from precursor tRNA. The sequence is that of Nuclear ribonuclease Z (ELAC) from Triticum aestivum (Wheat).